We begin with the raw amino-acid sequence, 417 residues long: MDKLIIKGGKKLSGEVTVSGSKNASLPVFVSTILAPAEHEFSNVPFLRDINTTIKVMEQLGAKIEGNGNVVRIDTRGIDKHEATYDLVKTMRASVLVLGPLLSRFGIARVSLPGGCAIGARPINLHLKGLAAMGADITLSHGYVEAKAKQLKGARINFDVSTVGGTEHLMMAAATAKGETILENAAREPEIVDLANVLIKMGARIDGAGTDTIRIDGVKELGPVTHRMMPDRIEAGTFMIAAAITGGDVKIRNMQLEHLDALVFKLQDAGVEIINKDNVVRVKGPKKVRSVNIKTRPYPGFPTDMQAQFMALMCLADGASVISENIFENRFMHVSELMRFGADITTEGNAATVKGVKKLSGAPVMATDLRASASLILAGLASDNTTEISRIYHLDRGYEFIEKKLAGLGADIERVQE.

A phosphoenolpyruvate-binding site is contributed by 22-23 (KN). A UDP-N-acetyl-alpha-D-glucosamine-binding site is contributed by R92. The active-site Proton donor is the C116. C116 is subject to 2-(S-cysteinyl)pyruvic acid O-phosphothioketal. UDP-N-acetyl-alpha-D-glucosamine is bound by residues D304 and I326.

It belongs to the EPSP synthase family. MurA subfamily.

It is found in the cytoplasm. It carries out the reaction phosphoenolpyruvate + UDP-N-acetyl-alpha-D-glucosamine = UDP-N-acetyl-3-O-(1-carboxyvinyl)-alpha-D-glucosamine + phosphate. It participates in cell wall biogenesis; peptidoglycan biosynthesis. Cell wall formation. Adds enolpyruvyl to UDP-N-acetylglucosamine. This Geotalea daltonii (strain DSM 22248 / JCM 15807 / FRC-32) (Geobacter daltonii) protein is UDP-N-acetylglucosamine 1-carboxyvinyltransferase.